The chain runs to 462 residues: tRNA modification GTPase MnmE (462 aa).

3 residues coordinate (6S)-5-formyl-5,6,7,8-tetrahydrofolate: arginine 23, glutamate 86, and lysine 125. Positions 221-384 (GIPVAIVGEP…LKNQLLSFVN (164 aa)) constitute a TrmE-type G domain. Asparagine 231 provides a ligand contact to K(+). GTP contacts are provided by residues 231 to 236 (NVGKST), 250 to 256 (SEIAGTT), and 275 to 278 (DTAG). Residue serine 235 participates in Mg(2+) binding. The K(+) site is built by serine 250, isoleucine 252, and threonine 255. Threonine 256 lines the Mg(2+) pocket. Lysine 462 provides a ligand contact to (6S)-5-formyl-5,6,7,8-tetrahydrofolate.

The protein belongs to the TRAFAC class TrmE-Era-EngA-EngB-Septin-like GTPase superfamily. TrmE GTPase family. In terms of assembly, homodimer. Heterotetramer of two MnmE and two MnmG subunits. Requires K(+) as cofactor.

The protein resides in the cytoplasm. Functionally, exhibits a very high intrinsic GTPase hydrolysis rate. Involved in the addition of a carboxymethylaminomethyl (cmnm) group at the wobble position (U34) of certain tRNAs, forming tRNA-cmnm(5)s(2)U34. The polypeptide is tRNA modification GTPase MnmE (Flavobacterium psychrophilum (strain ATCC 49511 / DSM 21280 / CIP 103535 / JIP02/86)).